The sequence spans 273 residues: 4-hydroxy-tetrahydrodipicolinate reductase (273 aa).

Residues 12-17 (GAGGRM) and Glu-38 each bind NAD(+). An NADP(+)-binding site is contributed by Arg-39. Residues 102–104 (GTT) and 126–129 (AANF) contribute to the NAD(+) site. His-159 functions as the Proton donor/acceptor in the catalytic mechanism. A (S)-2,3,4,5-tetrahydrodipicolinate-binding site is contributed by His-160. Lys-163 acts as the Proton donor in catalysis. (S)-2,3,4,5-tetrahydrodipicolinate is bound at residue 169–170 (GT).

It belongs to the DapB family. In terms of assembly, homotetramer.

The protein localises to the cytoplasm. The catalysed reaction is (S)-2,3,4,5-tetrahydrodipicolinate + NAD(+) + H2O = (2S,4S)-4-hydroxy-2,3,4,5-tetrahydrodipicolinate + NADH + H(+). It catalyses the reaction (S)-2,3,4,5-tetrahydrodipicolinate + NADP(+) + H2O = (2S,4S)-4-hydroxy-2,3,4,5-tetrahydrodipicolinate + NADPH + H(+). It functions in the pathway amino-acid biosynthesis; L-lysine biosynthesis via DAP pathway; (S)-tetrahydrodipicolinate from L-aspartate: step 4/4. Functionally, catalyzes the conversion of 4-hydroxy-tetrahydrodipicolinate (HTPA) to tetrahydrodipicolinate. The chain is 4-hydroxy-tetrahydrodipicolinate reductase from Shigella boydii serotype 18 (strain CDC 3083-94 / BS512).